We begin with the raw amino-acid sequence, 322 residues long: Tetrahydromethanopterin S-methyltransferase subunit H (322 aa).

This sequence belongs to the MtrH family. As to quaternary structure, the complex is composed of 8 subunits; MtrA, MtrB, MtrC, MtrD, MtrE, MtrF, MtrG and MtrH.

It carries out the reaction 5-methyl-5,6,7,8-tetrahydromethanopterin + coenzyme M + 2 Na(+)(in) = 5,6,7,8-tetrahydromethanopterin + methyl-coenzyme M + 2 Na(+)(out). It functions in the pathway one-carbon metabolism; methanogenesis from CO(2); methyl-coenzyme M from 5,10-methylene-5,6,7,8-tetrahydromethanopterin: step 2/2. Part of a complex that catalyzes the formation of methyl-coenzyme M and tetrahydromethanopterin from coenzyme M and methyl-tetrahydromethanopterin. This is an energy-conserving, sodium-ion translocating step. MtrH catalyzes the transfer of the methyl group from methyl-tetrahydromethanopterin to the corrinoid prosthetic group of MtrA. This chain is Tetrahydromethanopterin S-methyltransferase subunit H, found in Methanopyrus kandleri (strain AV19 / DSM 6324 / JCM 9639 / NBRC 100938).